The primary structure comprises 1027 residues: MKTFLGKKLWMASLAVALAAGSFAALPEMTSAAPSEPYTWKNVVTGAGGGFVPGIIFNESEKDLIYARTDIGGAYRWNPANESWIPLTDFVGWDDWNKNGVDALATDPVDPDRVYLAVGTYTNSWDKNNGAILRSTDRGDTWQTTTLPFKVGGNMPGRSMGERLVVDPNDNRILYFGARSGNGLWRSSDYGATWSKVTSFPNPGTYVQDPANEYGSDIVGLAWITFDKSSGQVGQATQTIYVGVADTAQSIYRSTDGGATWTAVPGQPTGYLPHHGVLDADGSLYITYSNGVGPYDGTKGDVWKLNTSTGAWTNISPIPSSSADNYFGYGGLAVDAQEPGTLMVATLNSWWPDAILFRSKDGGTTWTRIWEFDGYPNRKFRYTQNISAAPWLTFGTTPAPPEVSPKLGWMIGDLEIDPFDSDRMMYGTGATIYGTNNLTNWDNNEKIDISVMAKGVEEMAVLDLVSPPSGAHLVSGLGDVNGFRHDDLDQPPAKMFSSPNYASTESLDFAELNPSTMVRVGKADYAADPNAKSIGLSSDGGTNWYKANAEPAGTAGGGTVAISSDGSKLVWSTSDKGVHYSSTGGNSWTASTGIPAQAKVISDRVNPNKFYGFAAGKIYVSVNGGVSFSQTAAAGLPVDGNADLDAVPGVEGELWFAGGNEDGGPYGLWHSTDSGASFAKLSNVEEADSIGFGKAAPGRNSAALYAVAQIDGTRGFFRSDDGGASWVRINDDAHQYARVTTITGDPRIYGRVYLGTNGRGILYADPVGGNNGGETPPVSHSGISPQSTEFDLNADRQADIPVALTLNGNTLASIRNGNHVLVQGSDYTMSGSQVFLSKTYLATLSKGVQSLVFRFSAGNDATLSITVKDTTQVPLPEGSIRIEMYNGTTSATANSINPKFKLTNTGTAPLQLADVNIRYYYTIDGEKPLNFFCDWATAGSANVTGTFSALPAAVNGADHVLEIGFTASAGTLAAGQSTEVQVRFSKTDWTNFTQTDDYSFAASSTAYENWSKVTGYVSGTLQWGIEP.

The N-terminal stretch at 1-32 is a signal peptide; that stretch reads MKTFLGKKLWMASLAVALAAGSFAALPEMTSA. Asp-70 functions as the Nucleophile in the catalytic mechanism. BNR repeat units lie at residues 134-143, 185-196, 252-262, and 357-367; these read RSTDRGDTWQ, WRSSDYGATWSK, YRSTDGGATWT, and FRSKDGGTTWT. Asp-479 functions as the Proton donor in the catalytic mechanism. BNR repeat units lie at residues 537-545 and 717-727; these read SSDGGTNWY and FRSDDGGASWV. Residues 876 to 1027 form the CBM3 domain; that stretch reads PEGSIRIEMY…SGTLQWGIEP (152 aa).

It belongs to the glycosyl hydrolase 74 family.

Functionally, hydrolyzes the glucosidic bonds of unbranched Glc residues in tamarind seed xyloglucan, producing XXXG, XLXG, XXLG and XLLG. May have a dual endo- and exo- mode of action towards xyloglucan, or may have an endo-processive mode of action. The sequence is that of Xyloglucanase from Paenibacillus sp.